A 297-amino-acid polypeptide reads, in one-letter code: uncharacterized protein (297 aa).

It belongs to the metallo-dependent hydrolases superfamily.

This is an uncharacterized protein from Sinorhizobium fredii (strain NBRC 101917 / NGR234).